Here is a 418-residue protein sequence, read N- to C-terminus: MDSHNSAPPQIAEVRMDISSSTSVAAGNKVCRGAACDFSDSSNSSKDARERMASMRKLIIAVILCIIFMAVEVVGGIKANSLAILTDAAHLLSDVAAFAISLFSLWAAGWEATPQQSYGFFRIEILGALVSIQLIWLLAGILVYEAIVRLINESGEVQGSLMFAVSAFGLFVNIIMAVLLGHDHGHGHGHGHGHGHSHDHDHGGSDHDHHHHEDQEHGHVHHHEDGHGNSITVNLHHHPGTGHHHHDAEEPLLKSDAGCDSTQSGAKDAKKARRNINVHSAYLHVLGDSIQSIGVMIGGAIIWYKPEWKIIDLICTLIFSVIVLFTTIKMLRNILEVLMESTPREIDATSLENGLRDMDGVVAVHELHIWAITVGKVLLACHVTITQDADADQMLDKVIGYIKSEYNISHVTIQIERE.

Residues 1 to 56 lie on the Cytoplasmic side of the membrane; that stretch reads MDSHNSAPPQIAEVRMDISSSTSVAAGNKVCRGAACDFSDSSNSSKDARERMASMR. Residues 57–77 traverse the membrane as a helical segment; it reads KLIIAVILCIIFMAVEVVGGI. Residues 78–89 lie on the Vacuolar side of the membrane; sequence KANSLAILTDAA. Residues 90 to 110 form a helical membrane-spanning segment; the sequence is HLLSDVAAFAISLFSLWAAGW. Over 111–122 the chain is Cytoplasmic; it reads EATPQQSYGFFR. A helical membrane pass occupies residues 123-143; it reads IEILGALVSIQLIWLLAGILV. Residues 144 to 160 are Vacuolar-facing; sequence YEAIVRLINESGEVQGS. A helical transmembrane segment spans residues 161-181; sequence LMFAVSAFGLFVNIIMAVLLG. Residues 182 to 246 are required for zinc-binding; the sequence is HDHGHGHGHG…HHPGTGHHHH (65 aa). Over 182 to 282 the chain is Cytoplasmic; that stretch reads HDHGHGHGHG…RRNINVHSAY (101 aa). Residues 186-248 form a disordered region; the sequence is HGHGHGHGHG…PGTGHHHHDA (63 aa). Residues 196 to 227 are compositionally biased toward basic and acidic residues; it reads HSHDHDHGGSDHDHHHHEDQEHGHVHHHEDGH. Positions 235–245 are enriched in basic residues; that stretch reads LHHHPGTGHHH. The chain crosses the membrane as a helical span at residues 283–303; sequence LHVLGDSIQSIGVMIGGAIIW. The Vacuolar portion of the chain corresponds to 304-307; it reads YKPE. The chain crosses the membrane as a helical span at residues 308–328; the sequence is WKIIDLICTLIFSVIVLFTTI. The Cytoplasmic portion of the chain corresponds to 329–418; sequence KMLRNILEVL…SHVTIQIERE (90 aa).

It belongs to the cation diffusion facilitator (CDF) transporter (TC 2.A.4) family. SLC30A subfamily.

It localises to the vacuole membrane. Its function is as follows. Involved in sequestration of excess zinc in the cytoplasm into vacuoles to maintain zinc homeostasis. The chain is Metal tolerance protein 1 (MTP1) from Oryza sativa subsp. japonica (Rice).